The sequence spans 379 residues: tRNA-specific 2-thiouridylase MnmA (379 aa).

Residues 9–16 and Met-35 contribute to the ATP site; that span reads AMSGGVDS. An interaction with target base in tRNA region spans residues 94–96; that stretch reads NPD. The active-site Nucleophile is the Cys-99. An intrachain disulfide couples Cys-99 to Cys-195. Residue Gly-123 participates in ATP binding. The tract at residues 145-147 is interaction with tRNA; that stretch reads KDQ. Cys-195 functions as the Cysteine persulfide intermediate in the catalytic mechanism. Residues 307-308 form an interaction with tRNA region; that stretch reads RY.

Belongs to the MnmA/TRMU family.

Its subcellular location is the cytoplasm. The enzyme catalyses S-sulfanyl-L-cysteinyl-[protein] + uridine(34) in tRNA + AH2 + ATP = 2-thiouridine(34) in tRNA + L-cysteinyl-[protein] + A + AMP + diphosphate + H(+). In terms of biological role, catalyzes the 2-thiolation of uridine at the wobble position (U34) of tRNA, leading to the formation of s(2)U34. The protein is tRNA-specific 2-thiouridylase MnmA of Xylella fastidiosa (strain M12).